The sequence spans 279 residues: Shikimate dehydrogenase (NADP(+)) (279 aa).

Residues 20–22 and Thr-67 contribute to the shikimate site; that span reads SRS. The active-site Proton acceptor is the Lys-71. Asp-83 is an NADP(+) binding site. Residues Asn-92 and Asp-108 each coordinate shikimate. NADP(+) is bound by residues 134-138 and Leu-223; that span reads GAGGA. Tyr-225 provides a ligand contact to shikimate. NADP(+) is bound at residue Gly-246.

This sequence belongs to the shikimate dehydrogenase family. In terms of assembly, homodimer.

It carries out the reaction shikimate + NADP(+) = 3-dehydroshikimate + NADPH + H(+). It functions in the pathway metabolic intermediate biosynthesis; chorismate biosynthesis; chorismate from D-erythrose 4-phosphate and phosphoenolpyruvate: step 4/7. Involved in the biosynthesis of the chorismate, which leads to the biosynthesis of aromatic amino acids. Catalyzes the reversible NADPH linked reduction of 3-dehydroshikimate (DHSA) to yield shikimate (SA). This Cereibacter sphaeroides (strain ATCC 17025 / ATH 2.4.3) (Rhodobacter sphaeroides) protein is Shikimate dehydrogenase (NADP(+)).